We begin with the raw amino-acid sequence, 138 residues long: DNA-directed RNA polymerase subunit omega (138 aa).

Residues Gly104 to Ser138 form a disordered region. The span at Phe126–Ser138 shows a compositional bias: polar residues.

It belongs to the RNA polymerase subunit omega family. The RNAP catalytic core consists of 2 alpha, 1 beta, 1 beta' and 1 omega subunit. When a sigma factor is associated with the core the holoenzyme is formed, which can initiate transcription.

The enzyme catalyses RNA(n) + a ribonucleoside 5'-triphosphate = RNA(n+1) + diphosphate. Promotes RNA polymerase assembly. Latches the N- and C-terminal regions of the beta' subunit thereby facilitating its interaction with the beta and alpha subunits. This Ehrlichia chaffeensis (strain ATCC CRL-10679 / Arkansas) protein is DNA-directed RNA polymerase subunit omega.